Reading from the N-terminus, the 337-residue chain is DNA-directed RNA polymerase subunit alpha (337 aa).

Residues Met1 to Thr231 form an alpha N-terminal domain (alpha-NTD) region. The interval Asn248 to Gly337 is alpha C-terminal domain (alpha-CTD).

The protein belongs to the RNA polymerase alpha chain family. Homodimer. The RNAP catalytic core consists of 2 alpha, 1 beta, 1 beta' and 1 omega subunit. When a sigma factor is associated with the core the holoenzyme is formed, which can initiate transcription.

It catalyses the reaction RNA(n) + a ribonucleoside 5'-triphosphate = RNA(n+1) + diphosphate. Its function is as follows. DNA-dependent RNA polymerase catalyzes the transcription of DNA into RNA using the four ribonucleoside triphosphates as substrates. The polypeptide is DNA-directed RNA polymerase subunit alpha (Campylobacter jejuni subsp. jejuni serotype O:6 (strain 81116 / NCTC 11828)).